The following is a 311-amino-acid chain: Protoheme IX farnesyltransferase (311 aa).

Helical transmembrane passes span 38–58 (IKVVALLVLTALVGLALAPDM), 62–82 (YFVQLLSLFGIGLLSSSAAVI), 113–133 (LIFSAVIGTLGFSLLVFAANW), 134–154 (LTAQMTLFALVGYAFVYTMFL), 162–182 (IVIGGLAGAMPPLLGWISETG), 188–208 (PWILVMIIFTWTPPHFWALAI), 230–250 (FTKTCILLYSLLLTVVCFLPF), 251–271 (LIHMSGYLYLFVAMLINIIFI), and 286–306 (ALNLFKYSILHLTLLFIALFA).

It belongs to the UbiA prenyltransferase family. Protoheme IX farnesyltransferase subfamily.

The protein resides in the cell inner membrane. The catalysed reaction is heme b + (2E,6E)-farnesyl diphosphate + H2O = Fe(II)-heme o + diphosphate. Its pathway is porphyrin-containing compound metabolism; heme O biosynthesis; heme O from protoheme: step 1/1. Functionally, converts heme B (protoheme IX) to heme O by substitution of the vinyl group on carbon 2 of heme B porphyrin ring with a hydroxyethyl farnesyl side group. The sequence is that of Protoheme IX farnesyltransferase from Psychromonas ingrahamii (strain DSM 17664 / CCUG 51855 / 37).